The following is a 1321-amino-acid chain: C-Jun-amino-terminal kinase-interacting protein 4 (1321 aa).

Residue methionine 1 is modified to N-acetylmethionine. The 89-residue stretch at 7-95 folds into the RH1 domain; it reads VVYQEEPGGS…ITQYEREKAL (89 aa). Residues 66–166 adopt a coiled-coil conformation; it reads AQDQEHQVEL…NALHQRHTEM (101 aa). Serine 109, serine 183, serine 185, serine 194, and serine 203 each carry phosphoserine. The disordered stretch occupies residues 203 to 292; that stretch reads SLGIFPLPAG…SDVATIPTDT (90 aa). Phosphothreonine is present on threonine 217. A compositionally biased stretch (polar residues) spans 236 to 253; sequence ELSQPRSHTSLKVSNSPE. 5 positions are modified to phosphoserine: serine 238, serine 251, serine 265, serine 268, and serine 272. A compositionally biased stretch (polar residues) spans 266–285; it reads DVSQGGSKATTPASTANSDV. Threonine 292 bears the Phosphothreonine mark. Phosphoserine is present on residues serine 311, serine 329, serine 332, and serine 347. A phosphothreonine mark is found at threonine 348, threonine 365, and threonine 418. Positions 408–534 form a coiled coil; the sequence is REVENLILEN…LQEAVRWTEM (127 aa). Residues 473–489 are compositionally biased toward basic and acidic residues; it reads LRKARAEAEDARQKAKD. Disordered regions lie at residues 473–500 and 563–600; these read LRKA…TAQR and SSNT…SQLP. Positions 500–571 constitute an RH2 domain; that stretch reads RKRFTRVEMA…SSSNTTKKPE (72 aa). Threonine 586 carries the phosphothreonine modification. At serine 588 the chain carries Phosphoserine. Threonine 595 bears the Phosphothreonine mark. Serine 705, serine 728, serine 730, serine 732, and serine 733 each carry phosphoserine. Positions 724–758 form a coiled coil; sequence SKQRSASQSSLDKLDQELKEQQKELKNQEELSSLV. The disordered stretch occupies residues 854–906; it reads GAATSPSTNGASPVMDKPPEMEAENSEVDENVPTAEEATEATEGNAGSAEDTV. Over residues 855-864 the composition is skewed to polar residues; it reads AATSPSTNGA. Acidic residues predominate over residues 874–883; the sequence is MEAENSEVDE. A compositionally biased stretch (low complexity) spans 894 to 903; the sequence is ATEGNAGSAE. Serine 1188 is subject to Phosphoserine. The segment at 1239-1266 is disordered; sequence PQSSSSGTDLTGDKAGPSAQEPGSQTPL. Threonine 1264 bears the Phosphothreonine mark.

The protein belongs to the JIP scaffold family. As to quaternary structure, homodimer. The homodimer interacts with ARF6, forming a heterotetramer. Homooligomer. Interacts with MAX, MAPK14, MAP3K3, MYC, KNS2 and MAP2K4. Interaction with KNS2 is important in the formation of ternary complex with MAPK8. Interacts with NFKB1. Interacts with PIP4P1. Interacts with PIKFYVE. Interacts with MAPK8, MAPK9, MAPK10. Post-translationally, phosphorylated by MAPK8 and MAPK14. Expressed only in testis on the round spermatids of stage I, II and II. Absent in spermatogonia and spermatocyte. In terms of tissue distribution, expressed in testis and in acute myeloid leukemia (AML) patients. As to expression, expressed in testis.

Its subcellular location is the cytoplasm. It is found in the perinuclear region. The protein localises to the lysosome membrane. It localises to the cytoplasmic vesicle. The protein resides in the secretory vesicle. Its subcellular location is the acrosome. May play a role in spermatozoa-egg-interaction. The JNK-interacting protein (JIP) group of scaffold proteins selectively mediates JNK signaling by aggregating specific components of the MAPK cascade to form a functional JNK signaling module. Regulates lysosomal positioning by acting as an adapter protein which links PIP4P1-positive lysosomes to the dynein-dynactin complex. Assists PIKFYVE selective functionality in microtubule-based endosome-to-TGN trafficking. This chain is C-Jun-amino-terminal kinase-interacting protein 4, found in Homo sapiens (Human).